The primary structure comprises 420 residues: 3-isopropylmalate dehydratase large subunit (420 aa).

[4Fe-4S] cluster-binding residues include Cys-300, Cys-360, and Cys-363.

The protein belongs to the aconitase/IPM isomerase family. LeuC type 2 subfamily. As to quaternary structure, heterodimer of LeuC and LeuD. The cofactor is [4Fe-4S] cluster.

It carries out the reaction (2R,3S)-3-isopropylmalate = (2S)-2-isopropylmalate. The protein operates within amino-acid biosynthesis; L-leucine biosynthesis; L-leucine from 3-methyl-2-oxobutanoate: step 2/4. In terms of biological role, catalyzes the isomerization between 2-isopropylmalate and 3-isopropylmalate, via the formation of 2-isopropylmaleate. The polypeptide is 3-isopropylmalate dehydratase large subunit (Helicobacter hepaticus (strain ATCC 51449 / 3B1)).